Consider the following 65-residue polypeptide: Large ribosomal subunit protein bL35 (65 aa).

The disordered stretch occupies residues 1-65 (MPKIKTNRAA…GRLDRMLPYL (65 aa)). Residues 10–44 (AAKRFRKTASGKYKAGHANRSHILTKKATKRKRNL) show a composition bias toward basic residues. Over residues 50-65 (VRAEDAGRLDRMLPYL) the composition is skewed to basic and acidic residues.

The protein belongs to the bacterial ribosomal protein bL35 family.

The polypeptide is Large ribosomal subunit protein bL35 (Xylella fastidiosa (strain M23)).